The chain runs to 404 residues: UBP1-associated protein 2C (404 aa).

Residues 1–29 are disordered; the sequence is MDMMKKRKLDENGNGLNTNGGGTIGPTRL. 2 consecutive RRM domains span residues 75 to 152 and 167 to 248; these read RKLF…LAAS and RKIY…GKKG. 2 disordered regions span residues 246–270 and 344–404; these read KKGG…HGEG and GSGQ…PPNY.

As to expression, expressed in root apical and lateral meristems, young leaves and embryos.

Its subcellular location is the nucleus. In terms of biological role, heterogeneous nuclear ribonucleoprotein (hnRNP)-like protein that acts as a component of a complex regulating the turnover of mRNAs in the nucleus. Binds with high affinity to RNA molecules that contain U-rich sequences in 3'-UTRs. May function in complex with UBP1 and contribute to the stabilization of mRNAs in the nucleus. The polypeptide is UBP1-associated protein 2C (UBA2C) (Arabidopsis thaliana (Mouse-ear cress)).